Reading from the N-terminus, the 547-residue chain is Probable terpene synthase 3 (547 aa).

The Mg(2+) site is built by aspartate 298, aspartate 302, and glutamate 451. A DDXXD motif motif is present at residues 298 to 302 (DDIYD).

It belongs to the terpene synthase family. It depends on Mg(2+) as a cofactor.

In terms of biological role, probable sesquiterpene synthase. This is Probable terpene synthase 3 (TPS3) from Ricinus communis (Castor bean).